Reading from the N-terminus, the 231-residue chain is Large ribosomal subunit protein uL1 (231 aa).

It belongs to the universal ribosomal protein uL1 family. Part of the 50S ribosomal subunit.

Its function is as follows. Binds directly to 23S rRNA. The L1 stalk is quite mobile in the ribosome, and is involved in E site tRNA release. Functionally, protein L1 is also a translational repressor protein, it controls the translation of the L11 operon by binding to its mRNA. This is Large ribosomal subunit protein uL1 from Acinetobacter baumannii (strain AB307-0294).